The chain runs to 143 residues: Large ribosomal subunit protein uL11 (143 aa).

This sequence belongs to the universal ribosomal protein uL11 family. As to quaternary structure, part of the ribosomal stalk of the 50S ribosomal subunit. Interacts with L10 and the large rRNA to form the base of the stalk. L10 forms an elongated spine to which L12 dimers bind in a sequential fashion forming a multimeric L10(L12)X complex. One or more lysine residues are methylated.

Forms part of the ribosomal stalk which helps the ribosome interact with GTP-bound translation factors. The protein is Large ribosomal subunit protein uL11 of Bordetella parapertussis (strain 12822 / ATCC BAA-587 / NCTC 13253).